Here is a 148-residue protein sequence, read N- to C-terminus: Hemoglobin subunit beta-4 (148 aa).

Residues 3–148 (DWTDPERSAI…VVSALGRQYH (146 aa)) form the Globin domain. Heme b-binding residues include His-64 and His-93.

The protein belongs to the globin family. In terms of assembly, heterotetramer of two alpha chains and two beta chains. Red blood cells.

Involved in oxygen transport from gills to the various peripheral tissues. The polypeptide is Hemoglobin subunit beta-4 (hbb4) (Oncorhynchus mykiss (Rainbow trout)).